The sequence spans 392 residues: Dual-specificity RNA methyltransferase RlmN (392 aa).

The Proton acceptor role is filled by Glu-116. The region spanning Glu-122–Asp-364 is the Radical SAM core domain. Cys-129 and Cys-369 are joined by a disulfide. Positions 136, 140, and 143 each coordinate [4Fe-4S] cluster. Residues Gly-195–Glu-196, Ser-227, Ser-249–His-251, and Asn-326 contribute to the S-adenosyl-L-methionine site. The active-site S-methylcysteine intermediate is Cys-369.

This sequence belongs to the radical SAM superfamily. RlmN family. The cofactor is [4Fe-4S] cluster.

The protein localises to the cytoplasm. The catalysed reaction is adenosine(2503) in 23S rRNA + 2 reduced [2Fe-2S]-[ferredoxin] + 2 S-adenosyl-L-methionine = 2-methyladenosine(2503) in 23S rRNA + 5'-deoxyadenosine + L-methionine + 2 oxidized [2Fe-2S]-[ferredoxin] + S-adenosyl-L-homocysteine. The enzyme catalyses adenosine(37) in tRNA + 2 reduced [2Fe-2S]-[ferredoxin] + 2 S-adenosyl-L-methionine = 2-methyladenosine(37) in tRNA + 5'-deoxyadenosine + L-methionine + 2 oxidized [2Fe-2S]-[ferredoxin] + S-adenosyl-L-homocysteine. In terms of biological role, specifically methylates position 2 of adenine 2503 in 23S rRNA and position 2 of adenine 37 in tRNAs. m2A2503 modification seems to play a crucial role in the proofreading step occurring at the peptidyl transferase center and thus would serve to optimize ribosomal fidelity. This Cereibacter sphaeroides (strain ATCC 17025 / ATH 2.4.3) (Rhodobacter sphaeroides) protein is Dual-specificity RNA methyltransferase RlmN.